The sequence spans 101 residues: uncharacterized protein (101 aa).

The first 18 residues, 1-18, serve as a signal peptide directing secretion; sequence MSINALLYVLSLALLIWT. The helical transmembrane segment at 62-82 threads the bilayer; that stretch reads FQFDSIPSSSLSLSPFPFLFF.

Its subcellular location is the membrane. This is an uncharacterized protein from Saccharomyces cerevisiae (strain ATCC 204508 / S288c) (Baker's yeast).